An 81-amino-acid chain; its full sequence is Photosystem I iron-sulfur center (81 aa).

2 consecutive 4Fe-4S ferredoxin-type domains span residues 2 to 31 and 39 to 68; these read SHAVKIYDTCIGCTQCVRACPLDVLEMVPW and IASSPRTEDCVGCKRCETACPTDFLSIRVY. The [4Fe-4S] cluster site is built by Cys11, Cys14, Cys17, Cys21, Cys48, Cys51, Cys54, and Cys58.

As to quaternary structure, the cyanobacterial PSI reaction center is composed of one copy each of PsaA,B,C,D,E,F,I,J,K,L,M and X, and forms trimeric complexes. It depends on [4Fe-4S] cluster as a cofactor.

It is found in the cellular thylakoid membrane. The catalysed reaction is reduced [plastocyanin] + hnu + oxidized [2Fe-2S]-[ferredoxin] = oxidized [plastocyanin] + reduced [2Fe-2S]-[ferredoxin]. Its function is as follows. Apoprotein for the two 4Fe-4S centers FA and FB of photosystem I (PSI); essential for photochemical activity. FB is the terminal electron acceptor of PSI, donating electrons to ferredoxin. The C-terminus interacts with PsaA/B/D and helps assemble the protein into the PSI complex. Required for binding of PsaD and PsaE to PSI. PSI is a plastocyanin/cytochrome c6-ferredoxin oxidoreductase, converting photonic excitation into a charge separation, which transfers an electron from the donor P700 chlorophyll pair to the spectroscopically characterized acceptors A0, A1, FX, FA and FB in turn. This is Photosystem I iron-sulfur center from Prochlorococcus marinus (strain MIT 9312).